We begin with the raw amino-acid sequence, 390 residues long: Protein dimmed (390 aa).

A disordered region spans residues His-24–Glu-163. Composition is skewed to polar residues over residues Tyr-29 to Gly-44 and Arg-55 to Tyr-64. Asn-61 carries an N-linked (GlcNAc...) asparagine glycan. Residues Thr-69–Thr-78 are compositionally biased toward low complexity. Positions Ser-79–Ser-90 are enriched in gly residues. Low complexity predominate over residues Pro-122–Ala-141. 3 N-linked (GlcNAc...) asparagine glycosylation sites follow: Asn-128, Asn-133, and Asn-140. Residues Ala-151–Glu-163 show a composition bias toward basic and acidic residues. The bHLH domain maps to Met-156–Leu-208. Asn-207 and Asn-237 each carry an N-linked (GlcNAc...) asparagine glycan. The tract at residues Gln-312 to Gln-339 is disordered. Asn-347 is a glycosylation site (N-linked (GlcNAc...) asparagine).

In terms of assembly, forms homodimers via the bHLH domain. These dimers bind the core E-box sequence. As to expression, detected in the developing nervous system in the bilateral domains in the cephalic region that later on forms part of the ring gland. Concomitantly expressed in the larval central nervous system (CNS), including the dorsal chain neurons as well as several bilateral clusters of neurons: large, midline protocerebral brain cells (MC), lateral protocerebral brain cells (LC), ventral subesophageal neurons (SE) and lateral abdominal neurons, and the transverse nerves. Outside the CNS, detected in at least three classes of endocrine cells: intrinsic cells of the corpora cardiaca, midgut cells, the Inka cells, lateral Bipolar neurons associated with the segmental transverse nerve, and several peptidergic cells of the enteric nervous system. Expressed only in central and peripheral neuroendocrine secretory cells and neurosecretory neurons but not in sensory or motor neurons.

It is found in the cytoplasm. In terms of biological role, transcription factor that regulates neurosecretory (NS) cell function and neuroendocrine cell fate. Acts as a master regulator of common NS functions such as Phm expression and neuropeptide production. Plays a role as a regulator of peptide-containing large dense-core vesicle (LDCV) production and peptidergic cell differentiation. Controls transcription of FMRFamide in Tv neuronal cells and Fur1 in Ap-let cells (Tvb and dorsal apterous cells). Also required for up-regulation of Phm in Tv and Ap-let cells, and expression of three neuropeptide genes, Ms, FMRFamide and Lk. Influences both regulated and constitutive secretory activity in neuroendocrine cells at embryonic and postembryonic level. Loss of function studies show reduced cellular levels of various neuropeptides and neuropeptide biosynthetic enzymes. This Drosophila melanogaster (Fruit fly) protein is Protein dimmed (dimm).